The primary structure comprises 286 residues: tRNA (guanine-N(7)-)-methyltransferase (286 aa).

The tract at residues 1-22 (MGRARPKSQKRGDYRVSRSQEN) is disordered. S-adenosyl-L-methionine is bound by residues glycine 104, 127–128 (EI), 162–163 (NS), and cysteine 182. Aspartate 185 is an active-site residue. 260 to 262 (TEE) is an S-adenosyl-L-methionine binding site.

It belongs to the class I-like SAM-binding methyltransferase superfamily. TrmB family. In terms of assembly, forms a complex with TRM82.

The protein resides in the nucleus. It catalyses the reaction guanosine(46) in tRNA + S-adenosyl-L-methionine = N(7)-methylguanosine(46) in tRNA + S-adenosyl-L-homocysteine. The protein operates within tRNA modification; N(7)-methylguanine-tRNA biosynthesis. Catalyzes the formation of N(7)-methylguanine at position 46 (m7G46) in tRNA. The chain is tRNA (guanine-N(7)-)-methyltransferase from Colletotrichum orbiculare (strain 104-T / ATCC 96160 / CBS 514.97 / LARS 414 / MAFF 240422) (Cucumber anthracnose fungus).